The primary structure comprises 392 residues: Lipid-A-disaccharide synthase (392 aa).

It belongs to the LpxB family.

The catalysed reaction is a lipid X + a UDP-2-N,3-O-bis[(3R)-3-hydroxyacyl]-alpha-D-glucosamine = a lipid A disaccharide + UDP + H(+). Its pathway is bacterial outer membrane biogenesis; LPS lipid A biosynthesis. Condensation of UDP-2,3-diacylglucosamine and 2,3-diacylglucosamine-1-phosphate to form lipid A disaccharide, a precursor of lipid A, a phosphorylated glycolipid that anchors the lipopolysaccharide to the outer membrane of the cell. This chain is Lipid-A-disaccharide synthase, found in Syntrophotalea carbinolica (strain DSM 2380 / NBRC 103641 / GraBd1) (Pelobacter carbinolicus).